A 131-amino-acid polypeptide reads, in one-letter code: Holo-[acyl-carrier-protein] synthase (131 aa).

Residues Asp8 and Glu62 each contribute to the Mg(2+) site.

It belongs to the P-Pant transferase superfamily. AcpS family. The cofactor is Mg(2+).

The protein localises to the cytoplasm. The catalysed reaction is apo-[ACP] + CoA = holo-[ACP] + adenosine 3',5'-bisphosphate + H(+). Functionally, transfers the 4'-phosphopantetheine moiety from coenzyme A to a Ser of acyl-carrier-protein. The protein is Holo-[acyl-carrier-protein] synthase of Delftia acidovorans (strain DSM 14801 / SPH-1).